A 328-amino-acid chain; its full sequence is Methionyl-tRNA formyltransferase (328 aa).

110 to 113 (SNLP) provides a ligand contact to (6S)-5,6,7,8-tetrahydrofolate.

The protein belongs to the Fmt family.

The enzyme catalyses L-methionyl-tRNA(fMet) + (6R)-10-formyltetrahydrofolate = N-formyl-L-methionyl-tRNA(fMet) + (6S)-5,6,7,8-tetrahydrofolate + H(+). Functionally, attaches a formyl group to the free amino group of methionyl-tRNA(fMet). The formyl group appears to play a dual role in the initiator identity of N-formylmethionyl-tRNA by promoting its recognition by IF2 and preventing the misappropriation of this tRNA by the elongation apparatus. This is Methionyl-tRNA formyltransferase from Bifidobacterium longum (strain DJO10A).